The chain runs to 320 residues: Cytochrome f (320 aa).

A signal peptide spans 1 to 35 (MENRNTFSWVKEQMTRSISVSIMIYVITRTSISNA). Heme is bound by residues Y36, C56, C59, and H60. Residues 286–306 (VQGLLFFFASVILAQVFLVLK) form a helical membrane-spanning segment.

The protein belongs to the cytochrome f family. The 4 large subunits of the cytochrome b6-f complex are cytochrome b6, subunit IV (17 kDa polypeptide, petD), cytochrome f and the Rieske protein, while the 4 small subunits are PetG, PetL, PetM and PetN. The complex functions as a dimer. It depends on heme as a cofactor.

It localises to the plastid. It is found in the chloroplast thylakoid membrane. Its function is as follows. Component of the cytochrome b6-f complex, which mediates electron transfer between photosystem II (PSII) and photosystem I (PSI), cyclic electron flow around PSI, and state transitions. The polypeptide is Cytochrome f (Oryza nivara (Indian wild rice)).